The chain runs to 749 residues: Probable serine/threonine-protein kinase drkC (749 aa).

Residues 1–31 form the signal peptide; the sequence is MIIINKYIRMNKIAILFSFFILICCTGYSIS. Residues 32-423 lie on the Extracellular side of the membrane; the sequence is YKINGINENK…TSPNYQKIIY (392 aa). The segment at 124–153 is disordered; sequence DRTDQVSTSSSSSSFSEENKKSSSDDSAPA. Over residues 130 to 139 the composition is skewed to low complexity; the sequence is STSSSSSSFS. Asparagine 157, asparagine 189, asparagine 283, asparagine 358, asparagine 373, asparagine 381, and asparagine 397 each carry an N-linked (GlcNAc...) asparagine glycan. Residues 424–444 form a helical membrane-spanning segment; that stretch reads IVVGVGIAVLLIIAVGIYFII. The Cytoplasmic segment spans residues 445 to 749; it reads RLRIKNKRLN…QEIVKRLEAM (305 aa). In terms of domain architecture, Protein kinase spans 491 to 749; that stretch reads IVVQNRIGRG…QEIVKRLEAM (259 aa). ATP is bound by residues 497 to 505 and lysine 518; that span reads IGRGSCAEV. The active-site Proton acceptor is the aspartate 615.

Belongs to the protein kinase superfamily. TKL Ser/Thr protein kinase family.

Its subcellular location is the membrane. It catalyses the reaction L-seryl-[protein] + ATP = O-phospho-L-seryl-[protein] + ADP + H(+). It carries out the reaction L-threonyl-[protein] + ATP = O-phospho-L-threonyl-[protein] + ADP + H(+). This is Probable serine/threonine-protein kinase drkC (drkC) from Dictyostelium discoideum (Social amoeba).